Consider the following 305-residue polypeptide: Type II secretion system protein C (305 aa).

Residues 1 to 29 lie on the Cytoplasmic side of the membrane; that stretch reads MEFKQLPPLAAWPRLLSQNTLRWQKPISE. A helical transmembrane segment spans residues 30-50; it reads GLTLLLLVASAWTLGKMVWVV. At 51–305 the chain is on the periplasmic side; the sequence is SAEQTPVPTW…GQQHDVYIQF (255 aa).

This sequence belongs to the GSP C family.

The protein resides in the cell inner membrane. Its function is as follows. Involved in a type II secretion system (T2SS, formerly general secretion pathway, GSP) for the export of proteins. Required for secretion of cholera toxin through the outer membrane. In Vibrio cholerae serotype O1 (strain ATCC 39315 / El Tor Inaba N16961), this protein is Type II secretion system protein C (epsC).